A 291-amino-acid polypeptide reads, in one-letter code: Formamidopyrimidine-DNA glycosylase (291 aa).

Pro2 serves as the catalytic Schiff-base intermediate with DNA. The Proton donor role is filled by Glu3. Lys58 serves as the catalytic Proton donor; for beta-elimination activity. His100, Arg123, and Lys166 together coordinate DNA. An FPG-type zinc finger spans residues 257 to 291 (SVYGREGKECSRCGMHIVRIVQSGRSSFYCPQCQK). The active-site Proton donor; for delta-elimination activity is the Arg281.

Belongs to the FPG family. Monomer. Zn(2+) is required as a cofactor.

The enzyme catalyses Hydrolysis of DNA containing ring-opened 7-methylguanine residues, releasing 2,6-diamino-4-hydroxy-5-(N-methyl)formamidopyrimidine.. It catalyses the reaction 2'-deoxyribonucleotide-(2'-deoxyribose 5'-phosphate)-2'-deoxyribonucleotide-DNA = a 3'-end 2'-deoxyribonucleotide-(2,3-dehydro-2,3-deoxyribose 5'-phosphate)-DNA + a 5'-end 5'-phospho-2'-deoxyribonucleoside-DNA + H(+). Its function is as follows. Involved in base excision repair of DNA damaged by oxidation or by mutagenic agents. Acts as a DNA glycosylase that recognizes and removes damaged bases. Has a preference for oxidized purines, such as 7,8-dihydro-8-oxoguanine (8-oxoG). Has AP (apurinic/apyrimidinic) lyase activity and introduces nicks in the DNA strand. Cleaves the DNA backbone by beta-delta elimination to generate a single-strand break at the site of the removed base with both 3'- and 5'-phosphates. The chain is Formamidopyrimidine-DNA glycosylase from Bartonella bacilliformis (strain ATCC 35685 / KC583 / Herrer 020/F12,63).